The following is a 671-amino-acid chain: DNA ligase (671 aa).

NAD(+) contacts are provided by residues Asp32–Asp36, Ser81–Leu82, and Glu113. Lys115 functions as the N6-AMP-lysine intermediate in the catalytic mechanism. The NAD(+) site is built by Arg136, Glu173, Lys290, and Lys314. Cys408, Cys411, Cys426, and Cys432 together coordinate Zn(2+). Residues Glu593–Ser671 form the BRCT domain.

This sequence belongs to the NAD-dependent DNA ligase family. LigA subfamily. Mg(2+) serves as cofactor. Mn(2+) is required as a cofactor.

It catalyses the reaction NAD(+) + (deoxyribonucleotide)n-3'-hydroxyl + 5'-phospho-(deoxyribonucleotide)m = (deoxyribonucleotide)n+m + AMP + beta-nicotinamide D-nucleotide.. Its function is as follows. DNA ligase that catalyzes the formation of phosphodiester linkages between 5'-phosphoryl and 3'-hydroxyl groups in double-stranded DNA using NAD as a coenzyme and as the energy source for the reaction. It is essential for DNA replication and repair of damaged DNA. The chain is DNA ligase from Escherichia coli (strain SE11).